A 212-amino-acid polypeptide reads, in one-letter code: Transmembrane emp24 domain-containing protein p24delta7 (212 aa).

An N-terminal signal peptide occupies residues 1–22; it reads MNHRRSSIVLLILSILSPVTLS. Residues 23 to 179 lie on the Lumenal side of the membrane; the sequence is IRYELLSGHT…HNLNIATNSK (157 aa). In terms of domain architecture, GOLD spans 32–147; it reads TKCISEEIHA…VETMEFEVKK (116 aa). Positions 162–175 form a coiled coil; sequence LRDREEEMHNLNIA. R165 carries the omega-N-methylated arginine modification. Residues 180 to 200 form a helical membrane-spanning segment; sequence MAWLSFVSLAVCLSVAGLQFW. The Cytoplasmic portion of the chain corresponds to 201–212; it reads HLKTFFQKKKLI. Residues 205–206 carry the COPII vesicle coat-binding motif; sequence FF. Positions 205-212 match the COPI vesicle coat-binding motif; that stretch reads FFQKKKLI.

The protein belongs to the EMP24/GP25L family. In terms of assembly, probably oligomerizes with other members of the EMP24/GP25L family. Associates with the COPI vesicle coat (coatomer). Associates with the COPII vesicle coat (coatomer).

It is found in the endoplasmic reticulum membrane. The protein resides in the golgi apparatus. The protein localises to the cis-Golgi network membrane. It localises to the golgi stack membrane. In terms of biological role, involved in vesicular protein trafficking. Mainly functions in the early secretory pathway. Thought to act as cargo receptor at the lumenal side for incorporation of secretory cargo molecules into transport vesicles and to be involved in vesicle coat formation at the cytoplasmic side. The protein is Transmembrane emp24 domain-containing protein p24delta7 of Arabidopsis thaliana (Mouse-ear cress).